The sequence spans 198 residues: Small ribosomal subunit protein uS4 (198 aa).

The region spanning 91 to 154 (SRLDNVVYRL…KNLNIVQEAV (64 aa)) is the S4 RNA-binding domain.

This sequence belongs to the universal ribosomal protein uS4 family. In terms of assembly, part of the 30S ribosomal subunit. Contacts protein S5. The interaction surface between S4 and S5 is involved in control of translational fidelity.

Its function is as follows. One of the primary rRNA binding proteins, it binds directly to 16S rRNA where it nucleates assembly of the body of the 30S subunit. Functionally, with S5 and S12 plays an important role in translational accuracy. This chain is Small ribosomal subunit protein uS4, found in Onion yellows phytoplasma (strain OY-M).